The primary structure comprises 166 residues: 3-isopropylmalate dehydratase small subunit 1 (166 aa).

It belongs to the LeuD family. LeuD type 2 subfamily. Heterodimer of LeuC and LeuD.

The catalysed reaction is (2R,3S)-3-isopropylmalate = (2S)-2-isopropylmalate. The protein operates within amino-acid biosynthesis; L-leucine biosynthesis; L-leucine from 3-methyl-2-oxobutanoate: step 2/4. In terms of biological role, catalyzes the isomerization between 2-isopropylmalate and 3-isopropylmalate, via the formation of 2-isopropylmaleate. This chain is 3-isopropylmalate dehydratase small subunit 1 (leuD1), found in Thermotoga maritima (strain ATCC 43589 / DSM 3109 / JCM 10099 / NBRC 100826 / MSB8).